Here is a 486-residue protein sequence, read N- to C-terminus: Beta-barrel assembly-enhancing protease (486 aa).

An N-terminal signal peptide occupies residues Met1 to Ala19. His134 contacts Zn(2+). Glu135 is a catalytic residue. Zn(2+) contacts are provided by His138 and Glu199. The active-site Proton donor is the Asp203.

The protein belongs to the peptidase M48 family. BepA subfamily. Zn(2+) is required as a cofactor.

It localises to the periplasm. Functions both as a chaperone and a metalloprotease. Maintains the integrity of the outer membrane by promoting either the assembly or the elimination of outer membrane proteins, depending on their folding state. This Yersinia pestis protein is Beta-barrel assembly-enhancing protease.